Reading from the N-terminus, the 288-residue chain is Lipoyl synthase (288 aa).

[4Fe-4S] cluster is bound by residues Cys-39, Cys-44, Cys-50, Cys-65, Cys-69, Cys-72, and Ser-276. One can recognise a Radical SAM core domain in the interval 51–265 (WGKGTATFMI…KETGLKKGFE (215 aa)).

The protein belongs to the radical SAM superfamily. Lipoyl synthase family. [4Fe-4S] cluster serves as cofactor.

It is found in the cytoplasm. It carries out the reaction [[Fe-S] cluster scaffold protein carrying a second [4Fe-4S](2+) cluster] + N(6)-octanoyl-L-lysyl-[protein] + 2 oxidized [2Fe-2S]-[ferredoxin] + 2 S-adenosyl-L-methionine + 4 H(+) = [[Fe-S] cluster scaffold protein] + N(6)-[(R)-dihydrolipoyl]-L-lysyl-[protein] + 4 Fe(3+) + 2 hydrogen sulfide + 2 5'-deoxyadenosine + 2 L-methionine + 2 reduced [2Fe-2S]-[ferredoxin]. Its pathway is protein modification; protein lipoylation via endogenous pathway; protein N(6)-(lipoyl)lysine from octanoyl-[acyl-carrier-protein]: step 2/2. Catalyzes the radical-mediated insertion of two sulfur atoms into the C-6 and C-8 positions of the octanoyl moiety bound to the lipoyl domains of lipoate-dependent enzymes, thereby converting the octanoylated domains into lipoylated derivatives. The polypeptide is Lipoyl synthase (Bacteroides fragilis (strain ATCC 25285 / DSM 2151 / CCUG 4856 / JCM 11019 / LMG 10263 / NCTC 9343 / Onslow / VPI 2553 / EN-2)).